The sequence spans 366 residues: Alanine racemase (366 aa).

The Proton acceptor; specific for D-alanine role is filled by lysine 40. An N6-(pyridoxal phosphate)lysine modification is found at lysine 40. Arginine 136 is a binding site for substrate. Tyrosine 263 serves as the catalytic Proton acceptor; specific for L-alanine. Residue methionine 310 coordinates substrate.

This sequence belongs to the alanine racemase family. Pyridoxal 5'-phosphate is required as a cofactor.

The enzyme catalyses L-alanine = D-alanine. The protein operates within amino-acid biosynthesis; D-alanine biosynthesis; D-alanine from L-alanine: step 1/1. Its function is as follows. Catalyzes the interconversion of L-alanine and D-alanine. May also act on other amino acids. This Streptococcus pyogenes serotype M5 (strain Manfredo) protein is Alanine racemase (alr).